A 379-amino-acid polypeptide reads, in one-letter code: Type II methyltransferase M.SsoII (379 aa).

Residues 9 to 66 enclose the HTH cro/C1-type domain; sequence IKEKRERLHMTQKEFADALGLSKYGDRTIRRWERGETKPTGAELKAVIDFPDTPPYPN. The 308-residue stretch at 72 to 379 folds into the SAM-dependent MTase C5-type domain; it reads YRMIDLFAGI…AEKIISTLDS (308 aa). Cys142 is an active-site residue.

The protein belongs to the class I-like SAM-binding methyltransferase superfamily. C5-methyltransferase family.

The enzyme catalyses a 2'-deoxycytidine in DNA + S-adenosyl-L-methionine = a 5-methyl-2'-deoxycytidine in DNA + S-adenosyl-L-homocysteine + H(+). In terms of biological role, a methylase that recognizes the double-stranded sequence 5'-CCNGG-3', methylates C-2 on both strands, and protects the DNA from cleavage by the SsoII endonuclease. The chain is Type II methyltransferase M.SsoII (ssoIIM) from Shigella sonnei.